The following is a 123-amino-acid chain: Small ribosomal subunit protein uS12 (123 aa).

The residue at position 89 (D89) is a 3-methylthioaspartic acid.

This sequence belongs to the universal ribosomal protein uS12 family. Part of the 30S ribosomal subunit. Contacts proteins S8 and S17. May interact with IF1 in the 30S initiation complex.

With S4 and S5 plays an important role in translational accuracy. Functionally, interacts with and stabilizes bases of the 16S rRNA that are involved in tRNA selection in the A site and with the mRNA backbone. Located at the interface of the 30S and 50S subunits, it traverses the body of the 30S subunit contacting proteins on the other side and probably holding the rRNA structure together. The combined cluster of proteins S8, S12 and S17 appears to hold together the shoulder and platform of the 30S subunit. This chain is Small ribosomal subunit protein uS12, found in Methylobacterium nodulans (strain LMG 21967 / CNCM I-2342 / ORS 2060).